We begin with the raw amino-acid sequence, 283 residues long: ATP phosphoribosyltransferase (283 aa).

The protein belongs to the ATP phosphoribosyltransferase family. Long subfamily. Mg(2+) is required as a cofactor.

The protein resides in the cytoplasm. It carries out the reaction 1-(5-phospho-beta-D-ribosyl)-ATP + diphosphate = 5-phospho-alpha-D-ribose 1-diphosphate + ATP. It participates in amino-acid biosynthesis; L-histidine biosynthesis; L-histidine from 5-phospho-alpha-D-ribose 1-diphosphate: step 1/9. Feedback inhibited by histidine. Catalyzes the condensation of ATP and 5-phosphoribose 1-diphosphate to form N'-(5'-phosphoribosyl)-ATP (PR-ATP). Has a crucial role in the pathway because the rate of histidine biosynthesis seems to be controlled primarily by regulation of HisG enzymatic activity. The chain is ATP phosphoribosyltransferase from Ignicoccus hospitalis (strain KIN4/I / DSM 18386 / JCM 14125).